Reading from the N-terminus, the 473-residue chain is Photosystem II CP43 reaction center protein (473 aa).

Positions 1–14 are excised as a propeptide; that stretch reads MKTLYSLRRFYHVE. Thr15 carries the N-acetylthreonine modification. Thr15 carries the phosphothreonine modification. A run of 5 helical transmembrane segments spans residues 69–93, 134–155, 178–200, 255–275, and 291–312; these read LFEV…PHLA, LLGP…KDRN, KAFY…RKIT, KPFA…LSYS, and WFNN…ASQA. Glu367 contributes to the [CaMn4O5] cluster binding site. Residues 447-471 traverse the membrane as a helical segment; the sequence is RARAAAAGFEKGIDRDFEPVLSMTP.

Belongs to the PsbB/PsbC family. PsbC subfamily. In terms of assembly, PSII is composed of 1 copy each of membrane proteins PsbA, PsbB, PsbC, PsbD, PsbE, PsbF, PsbH, PsbI, PsbJ, PsbK, PsbL, PsbM, PsbT, PsbX, PsbY, PsbZ, Psb30/Ycf12, at least 3 peripheral proteins of the oxygen-evolving complex and a large number of cofactors. It forms dimeric complexes. The cofactor is Binds multiple chlorophylls and provides some of the ligands for the Ca-4Mn-5O cluster of the oxygen-evolving complex. It may also provide a ligand for a Cl- that is required for oxygen evolution. PSII binds additional chlorophylls, carotenoids and specific lipids..

The protein localises to the plastid. It is found in the chloroplast thylakoid membrane. Its function is as follows. One of the components of the core complex of photosystem II (PSII). It binds chlorophyll and helps catalyze the primary light-induced photochemical processes of PSII. PSII is a light-driven water:plastoquinone oxidoreductase, using light energy to abstract electrons from H(2)O, generating O(2) and a proton gradient subsequently used for ATP formation. This chain is Photosystem II CP43 reaction center protein, found in Pisum sativum (Garden pea).